The sequence spans 246 residues: B-cell receptor-associated protein 31 (246 aa).

Topologically, residues 2-6 (SLQWT) are lumenal. The chain crosses the membrane as a helical span at residues 7 to 27 (AVATFLYAEVFVVLLLCIPFI). Residues 28–43 (SPKRWQKIFKSRLVEL) are Cytoplasmic-facing. A helical membrane pass occupies residues 44 to 64 (LVSYGNTFFVVLIVILVLLVI). At 65-102 (DAVREIRKYDDVTEKVNLQNNPGAMEHFHMKLFRAQRN) the chain is on the lumenal side. Residues 103–123 (LYIAGFSLLLSFLLRRLVTLI) traverse the membrane as a helical segment. Residues 124-246 (SQQATLLASN…VDGPMDKKEE (123 aa)) are Cytoplasmic-facing. A coiled-coil region spans residues 165–237 (GGKLDVGNAE…EEHAKLQAAV (73 aa)). Positions 243–246 (KKEE) match the Di-lysine motif motif.

This sequence belongs to the BCAP29/BCAP31 family. Homodimer and heterodimer with BCAP29. Binds CASP8 (isoform 9) as a complex containing BCAP31, BCAP29, BCL2 and/or BCL2L1. Forms a complex (via C-terminus) with TOMM40 which mediates the translocation of components of the mitochondrial membrane respiratory chain NADH dehydrogenase (Complex I) from the cytosol to the mitochondria; within the complex BCAP31 interacts directly with unprocessed and processed NDUFS4 and NDUFB11. Interacts with VDAC1. Interacts with VAMP3, VAMP1 and membrane IgD immunoglobulins. Interacts with HACD2. Interacts with DNM1L; may form part of a larger protein complex at the endoplasmic reticulum-mitochondrial interface during mitochondrial fission. As to quaternary structure, (Microbial infection) Interacts (via C-terminus) with HRSV membrane protein SH; this interaction is direct. In terms of processing, cleaved by CASP8 and other caspases. As to expression, ubiquitous. Highly expressed in neurons and discrete endocrine cells.

It is found in the endoplasmic reticulum membrane. The protein localises to the endoplasmic reticulum-Golgi intermediate compartment membrane. Its function is as follows. Functions as a chaperone protein. Is one of the most abundant endoplasmic reticulum (ER) proteins. Plays a role in the export of secreted proteins in the ER, the recognition of abnormally folded protein and their targeting to the ER associated-degradation (ERAD). Also serves as a cargo receptor for the export of transmembrane proteins. Plays a role in the assembly of the mitochondrial membrane respiratory chain NADH dehydrogenase (Complex I) by stimulating the translocation of NDUFS4 and NDUFB11 from the cytosol to the mitochondria via interaction with TOMM40. In response to ER stress, delocalizes from the ER-mitochondria contact sites and binds BCL2. May be involved in CASP8-mediated apoptosis. The protein is B-cell receptor-associated protein 31 of Homo sapiens (Human).